Consider the following 659-residue polypeptide: ATP-binding cassette sub-family D member 3 (659 aa).

Residues 1-61 (MAAFSKYLTA…GKKERAVVDK (61 aa)) form an interaction with PEX19 region. N-linked (GlcNAc...) asparagine glycosylation occurs at N12. K61 bears the N6-acetyllysine mark. The helical transmembrane segment at 84-104 (GYLVLIAVMLVSRTYCDVWMI) threads the bilayer. The ABC transmembrane type-1 domain maps to 85-372 (YLVLIAVMLV…MLLRMSQALG (288 aa)). N106 carries an N-linked (GlcNAc...) asparagine glycan. A helical transmembrane segment spans residues 126–146 (LLNFIAAMPLISLVNNFLKYG). N-linked (GlcNAc...) asparagine glycosylation occurs at N206. Residues 224–244 (AIGAQGPASMMAYLVVSGLFL) traverse the membrane as a helical segment. Residue K260 is modified to N6-acetyllysine. A helical membrane pass occupies residues 313 to 333 (MGFIDSIIAKYLATVVGYLVV). At K399 the chain carries N6-acetyllysine. One can recognise an ABC transporter domain in the interval 440-659 (IKFDHVPLAT…ITEDTVEFGS (220 aa)). Residue 473-480 (GPNGCGKS) participates in ATP binding. An N6-acetyllysine modification is found at K533. S659 bears the Phosphoserine mark.

Belongs to the ABC transporter superfamily. ABCD family. Peroxisomal fatty acyl CoA transporter (TC 3.A.1.203) subfamily. Homodimers. Can form heterodimers with ABCD1 and ABCD2. Dimerization is necessary to form an active transporter. Interacts with PEX19; mediates the targeting of ABCD3 to peroxisomes. In terms of processing, ubiquitinated by PEX2 during pexophagy in response to starvation, leading to its degradation.

Its subcellular location is the peroxisome membrane. It carries out the reaction a very long-chain fatty acyl-CoA + H2O = a very long-chain fatty acid + CoA + H(+). It catalyses the reaction a very long-chain fatty acid(in) + ATP + H2O = a very long-chain fatty acid(out) + ADP + phosphate + H(+). The enzyme catalyses a long-chain fatty acyl-CoA + H2O = a long-chain fatty acid + CoA + H(+). The catalysed reaction is a long-chain fatty acid(in) + ATP + H2O = a long-chain fatty acid(out) + ADP + phosphate + H(+). It carries out the reaction pristanoyl-CoA + H2O = 2,6,10,14-tetramethylpentadecanoate + CoA + H(+). It catalyses the reaction 2,6,10,14-tetramethylpentadecanoate(in) + ATP + H2O = 2,6,10,14-tetramethylpentadecanoate(out) + ADP + phosphate + H(+). The enzyme catalyses hexadecanedioyl-CoA + H2O = hexadecanedioate + CoA + H(+). The catalysed reaction is hexadecanedioate(in) + ATP + H2O = hexadecanedioate(out) + ADP + phosphate + H(+). It carries out the reaction (5Z,8Z,11Z,14Z,17Z)-eicosapentaenoyl-CoA + H2O = (5Z,8Z,11Z,14Z,17Z)-eicosapentaenoate + CoA + H(+). It catalyses the reaction (5Z,8Z,11Z,14Z,17Z)-eicosapentaenoate(in) + ATP + H2O = (5Z,8Z,11Z,14Z,17Z)-eicosapentaenoate(out) + ADP + phosphate + H(+). The enzyme catalyses (4Z,7Z,10Z,13Z,16Z,19Z)-docosahexaenoyl-CoA + H2O = (4Z,7Z,10Z,13Z,16Z,19Z)-docosahexaenoate + CoA + H(+). The catalysed reaction is (4Z,7Z,10Z,13Z,16Z,19Z)-docosahexaenoate(in) + ATP + H2O = (4Z,7Z,10Z,13Z,16Z,19Z)-docosahexaenoate(out) + ADP + phosphate + H(+). Its function is as follows. Broad substrate specificity ATP-dependent transporter of the ATP-binding cassette (ABC) family that catalyzes the transport of long-chain fatty acids (LCFA)-CoA, dicarboxylic acids-CoA, long-branched-chain fatty acids-CoA and bile acids from the cytosol to the peroxisome lumen for beta-oxydation. Has fatty acyl-CoA thioesterase and ATPase activities. Probably hydrolyzes fatty acyl-CoAs into free fatty acids prior to their ATP-dependent transport into peroxisomes. Thus, play a role in regulation of LCFAs and energy metabolism namely, in the degradation and biosynthesis of fatty acids by beta-oxidation. The protein is ATP-binding cassette sub-family D member 3 of Homo sapiens (Human).